Reading from the N-terminus, the 63-residue chain is Iota-crystallin (63 aa).

The protein belongs to the calycin superfamily. Fatty-acid binding protein (FABP) family.

Binds vitamin A2 in the eye lens and thus functions as a UV filter. Intracellular transport of retinol. This Gonatodes vittatus (Wiegmann's striped gecko) protein is Iota-crystallin (CRBPI).